Here is a 495-residue protein sequence, read N- to C-terminus: Taxoid 2-alpha-hydroxylase (495 aa).

A helical membrane pass occupies residues 17 to 37; the sequence is LQSSAILLTVVSGIIVIVILL. A heme-binding site is contributed by cysteine 441.

It belongs to the cytochrome P450 family.

The protein resides in the microsome membrane. The catalysed reaction is taxusin + reduced [NADPH--hemoprotein reductase] + O2 = 2alpha-hydroxytaxusin + oxidized [NADPH--hemoprotein reductase] + H2O + H(+). It catalyses the reaction 7beta-hydroxytaxusin + reduced [NADPH--hemoprotein reductase] + O2 = 2alpha,7beta-dihydroxytaxusin + oxidized [NADPH--hemoprotein reductase] + H2O + H(+). Its pathway is alkaloid biosynthesis; taxol biosynthesis. In terms of biological role, catalyzes the conversion of taxusin to 2-alpha-hydroxytaxusin in taxol biosynthesis. Catalyzes the conversion of 7-beta-hydroxytaxusin to 2-alpha-7-beta-hydroxytaxusin in taxol biosynthesis. The chain is Taxoid 2-alpha-hydroxylase from Taxus canadensis (Canadian yew).